A 395-amino-acid polypeptide reads, in one-letter code: ATP phosphoribosyltransferase regulatory subunit (395 aa).

This sequence belongs to the class-II aminoacyl-tRNA synthetase family. HisZ subfamily. As to quaternary structure, heteromultimer composed of HisG and HisZ subunits.

The protein localises to the cytoplasm. It participates in amino-acid biosynthesis; L-histidine biosynthesis; L-histidine from 5-phospho-alpha-D-ribose 1-diphosphate: step 1/9. Required for the first step of histidine biosynthesis. May allow the feedback regulation of ATP phosphoribosyltransferase activity by histidine. This is ATP phosphoribosyltransferase regulatory subunit from Ectopseudomonas mendocina (strain ymp) (Pseudomonas mendocina).